Reading from the N-terminus, the 126-residue chain is Large ribosomal subunit protein bL17 (126 aa).

Belongs to the bacterial ribosomal protein bL17 family. As to quaternary structure, part of the 50S ribosomal subunit. Contacts protein L32.

This chain is Large ribosomal subunit protein bL17, found in Xylella fastidiosa (strain 9a5c).